Consider the following 737-residue polypeptide: Propionyl-CoA carboxylase alpha chain, mitochondrial (737 aa).

A mitochondrion-targeting transit peptide spans Met1–Ser61. The Biotin carboxylation domain maps to Thr71–Pro518. An N6-acetyllysine; alternate modification is found at Lys74. An N6-succinyllysine; alternate modification is found at Lys74. An N6-succinyllysine modification is found at Lys128. Residue Lys159 is modified to N6-acetyllysine; alternate. N6-succinyllysine; alternate is present on Lys159. Lys163 carries the post-translational modification N6-acetyllysine. Position 186 (Lys186) interacts with ATP. Positions Lys190–Lys387 constitute an ATP-grasp domain. Residue Lys197 is modified to N6-succinyllysine. At Lys209 the chain carries N6-acetyllysine; alternate. Position 209 is an N6-succinyllysine; alternate (Lys209). ATP is bound by residues Ala218–Ile279, Glu270, and Asn305. The residue at position 261 (Ser261) is a Phosphoserine. Residue Lys271 is modified to N6-succinyllysine. Lys337 carries the N6-acetyllysine; alternate modification. Lys337 is subject to N6-succinyllysine; alternate. Mg(2+) is bound by residues Glu345, Glu358, and Asn360. Mn(2+)-binding residues include Glu345, Glu358, and Asn360. Arg362 is a catalytic residue. Lys394 and Lys416 each carry N6-succinyllysine. Phe418 contributes to the biotin binding site. Residue Lys505 is modified to N6-acetyllysine. Residues Lys511, Lys522, Lys567, and Lys657 each carry the N6-succinyllysine modification. A Biotinyl-binding domain is found at Phe658–Glu737. N6-biotinyllysine; by HLCS is present on Lys703.

As to quaternary structure, the holoenzyme is a dodecamer composed of 6 PCCA/alpha subunits and 6 PCCB/beta subunits. Interacts (via the biotin carboxylation domain) with SIRT4. Interacts with SIRT3 and SIRT5. Biotin serves as cofactor. Mg(2+) is required as a cofactor. It depends on Mn(2+) as a cofactor. Acetylated. Post-translationally, the biotin cofactor is covalently attached to the C-terminal biotinyl-binding domain and is required for the catalytic activity. Biotinylation is catalyzed by HLCS.

It localises to the mitochondrion matrix. It catalyses the reaction propanoyl-CoA + hydrogencarbonate + ATP = (S)-methylmalonyl-CoA + ADP + phosphate + H(+). It carries out the reaction butanoyl-CoA + hydrogencarbonate + ATP = (2S)-ethylmalonyl-CoA + ADP + phosphate + H(+). It participates in metabolic intermediate metabolism; propanoyl-CoA degradation; succinyl-CoA from propanoyl-CoA: step 1/3. Functionally, this is one of the 2 subunits of the biotin-dependent propionyl-CoA carboxylase (PCC), a mitochondrial enzyme involved in the catabolism of odd chain fatty acids, branched-chain amino acids isoleucine, threonine, methionine, and valine and other metabolites. Propionyl-CoA carboxylase catalyzes the carboxylation of propionyl-CoA/propanoyl-CoA to D-methylmalonyl-CoA/(S)-methylmalonyl-CoA. Within the holoenzyme, the alpha subunit catalyzes the ATP-dependent carboxylation of the biotin carried by the biotin carboxyl carrier (BCC) domain, while the beta subunit then transfers the carboxyl group from carboxylated biotin to propionyl-CoA. Propionyl-CoA carboxylase also significantly acts on butyryl-CoA/butanoyl-CoA, which is converted to ethylmalonyl-CoA/(2S)-ethylmalonyl-CoA. Other alternative minor substrates include (2E)-butenoyl-CoA/crotonoyl-CoA. This Rattus norvegicus (Rat) protein is Propionyl-CoA carboxylase alpha chain, mitochondrial.